The sequence spans 188 residues: Elongation factor P (188 aa).

Belongs to the elongation factor P family.

The protein resides in the cytoplasm. Its pathway is protein biosynthesis; polypeptide chain elongation. Its function is as follows. Involved in peptide bond synthesis. Stimulates efficient translation and peptide-bond synthesis on native or reconstituted 70S ribosomes in vitro. Probably functions indirectly by altering the affinity of the ribosome for aminoacyl-tRNA, thus increasing their reactivity as acceptors for peptidyl transferase. In Bradyrhizobium diazoefficiens (strain JCM 10833 / BCRC 13528 / IAM 13628 / NBRC 14792 / USDA 110), this protein is Elongation factor P.